We begin with the raw amino-acid sequence, 89 residues long: Large ribosomal subunit protein uL29c (89 aa).

It belongs to the universal ribosomal protein uL29 family.

It is found in the plastid. It localises to the chloroplast. The sequence is that of Large ribosomal subunit protein uL29c (rpl29) from Trieres chinensis (Marine centric diatom).